Reading from the N-terminus, the 126-residue chain is Bactofilin BacO (126 aa).

The protein belongs to the bactofilin family. Interacts with BacN and probably also BacP, the 3 proteins colocalize as an extended structure. Interacts with PadC.

It localises to the cytoplasm. Its subcellular location is the cytoskeleton. Its function is as follows. A non-essential component of the chromosome segregation machinery. Positions the ParA-ParB-parS chromosome segregation machinery within the cell; BacP seems to be the most important bactofilin in this process. Forms a heteropolymeric, subpolar scaffold in the cell; BacP probably forms the core, BacO contributes to position and integrity while BacN does not seem to contribute to assembly. In Myxococcus xanthus (strain DK1622), this protein is Bactofilin BacO.